We begin with the raw amino-acid sequence, 105 residues long: Large ribosomal subunit protein uL24 (105 aa).

Belongs to the universal ribosomal protein uL24 family. In terms of assembly, part of the 50S ribosomal subunit.

Functionally, one of two assembly initiator proteins, it binds directly to the 5'-end of the 23S rRNA, where it nucleates assembly of the 50S subunit. One of the proteins that surrounds the polypeptide exit tunnel on the outside of the subunit. This chain is Large ribosomal subunit protein uL24, found in Sorangium cellulosum (strain So ce56) (Polyangium cellulosum (strain So ce56)).